A 257-amino-acid chain; its full sequence is UPF0246 protein YaaA (257 aa).

The protein belongs to the UPF0246 family.

The sequence is that of UPF0246 protein YaaA from Salmonella typhi.